The sequence spans 69 residues: MARYRHSRSRSRSRYRRRRRRRRSRYRGRRRRYRRSRRRRRRGRRRGNCLGRRGYRRRRYSRRRRRRYY.

Residues 1–69 (MARYRHSRSR…YSRRRRRRYY (69 aa)) are disordered.

It belongs to the protamine P1 family. As to expression, testis.

It localises to the nucleus. It is found in the chromosome. Functionally, protamines substitute for histones in the chromatin of sperm during the haploid phase of spermatogenesis. They compact sperm DNA into a highly condensed, stable and inactive complex. In Pseudochirops cupreus (Coppery ringtail), this protein is Sperm protamine P1 (PRM1).